We begin with the raw amino-acid sequence, 395 residues long: Chorismate synthase (395 aa).

Arginine 48 serves as a coordination point for NADP(+). 125 to 127 (RSS) provides a ligand contact to FMN. Residues 264–292 (RNEDWTFDDGESFDHVESEEGDPVPVGND) are disordered. FMN contacts are provided by residues glycine 298, 313–317 (HAPTS), and arginine 340. The disordered stretch occupies residues 373–395 (PDRVDGNPGQYDTDYHPSSPDND).

This sequence belongs to the chorismate synthase family. Requires FMNH2 as cofactor.

The enzyme catalyses 5-O-(1-carboxyvinyl)-3-phosphoshikimate = chorismate + phosphate. It functions in the pathway metabolic intermediate biosynthesis; chorismate biosynthesis; chorismate from D-erythrose 4-phosphate and phosphoenolpyruvate: step 7/7. In terms of biological role, catalyzes the anti-1,4-elimination of the C-3 phosphate and the C-6 proR hydrogen from 5-enolpyruvylshikimate-3-phosphate (EPSP) to yield chorismate, which is the branch point compound that serves as the starting substrate for the three terminal pathways of aromatic amino acid biosynthesis. This reaction introduces a second double bond into the aromatic ring system. The protein is Chorismate synthase of Halorubrum lacusprofundi (strain ATCC 49239 / DSM 5036 / JCM 8891 / ACAM 34).